The primary structure comprises 199 residues: Large ribosomal subunit protein bL25 (199 aa).

Belongs to the bacterial ribosomal protein bL25 family. CTC subfamily. In terms of assembly, part of the 50S ribosomal subunit; part of the 5S rRNA/L5/L18/L25 subcomplex. Contacts the 5S rRNA. Binds to the 5S rRNA independently of L5 and L18.

This is one of the proteins that binds to the 5S RNA in the ribosome where it forms part of the central protuberance. This is Large ribosomal subunit protein bL25 from Herpetosiphon aurantiacus (strain ATCC 23779 / DSM 785 / 114-95).